The primary structure comprises 154 residues: Protein E6 (154 aa).

2 zinc fingers span residues 30–66 (CVFC…CPRC) and 103–139 (CCKC…CLHC).

It belongs to the papillomaviridae E6 protein family. Forms homodimers. Interacts with ubiquitin-protein ligase UBE3A/E6-AP; this interaction stimulates UBE3A ubiquitin activity. Interacts with host TP53 and EP300; this interaction inhibits TP53 activity.

The protein resides in the host cytoplasm. Its subcellular location is the host nucleus. In terms of biological role, plays a major role in the induction and maintenance of cellular transformation. E6 associates with host UBE3A/E6-AP ubiquitin-protein ligase and modulates its activity. Sequesters tumor suppressor TP53 in the host cytoplasm and modulates its activity by interacting with host EP300 that results in the reduction of TP53 acetylation and activation. In turn, apoptosis induced by DNA damage is inhibited. E6 also protects host keratinocytes from apoptosis by mediating the degradation of host BAK1. May also inhibit host immune response. The protein is Protein E6 of Homo sapiens (Human).